Consider the following 289-residue polypeptide: uncharacterized protein (289 aa).

A signal peptide spans 1–19 (MAKWLGAPLARGVSTATRA). Transmembrane regions (helical) follow at residues 90-110 (GLLA…GWGV) and 257-277 (AALS…LVFA).

Its subcellular location is the cell membrane. This is an uncharacterized protein from Mycobacterium tuberculosis (strain ATCC 25618 / H37Rv).